A 213-amino-acid polypeptide reads, in one-letter code: Thymidylate kinase (213 aa).

An ATP-binding site is contributed by 10–17; the sequence is GPDGAGKT.

It belongs to the thymidylate kinase family.

It carries out the reaction dTMP + ATP = dTDP + ADP. Phosphorylation of dTMP to form dTDP in both de novo and salvage pathways of dTTP synthesis. The protein is Thymidylate kinase of Limosilactobacillus reuteri (strain DSM 20016) (Lactobacillus reuteri).